Reading from the N-terminus, the 147-residue chain is Large ribosomal subunit protein bL9 (147 aa).

This sequence belongs to the bacterial ribosomal protein bL9 family.

Functionally, binds to the 23S rRNA. In Gemmatimonas aurantiaca (strain DSM 14586 / JCM 11422 / NBRC 100505 / T-27), this protein is Large ribosomal subunit protein bL9.